A 670-amino-acid chain; its full sequence is NAD-dependent histone deacetylase SIR2 (670 aa).

Disordered stretches follow at residues 1–157 (MTEY…EHPI) and 235–263 (DNDD…PSPS). The segment covering 45–68 (NEDVDVDADADVDADADADADAEE) has biased composition (acidic residues). The segment covering 69-81 (DAQKDILEETKAD) has biased composition (basic and acidic residues). Residues 82–92 (ELDEVVDEYEE) show a composition bias toward acidic residues. The segment covering 96–119 (SSNFNGTASDHVGITSSNTGSTAL) has biased composition (polar residues). Low complexity predominate over residues 120–142 (AASSADTNSGSGNGTGTMATNGT). Residues 239–261 (SLPQKNSSETKNVSDTYTATYPS) are compositionally biased toward polar residues. The Deacetylase sirtuin-type domain occupies 293–583 (RLTNFHTIDD…ALVAQKCGWD (291 aa)). NAD(+) contacts are provided by residues 318 to 337 (GAGI…EGFY) and 400 to 403 (QNID). Residue His420 is the Proton acceptor of the active site. Zn(2+) contacts are provided by Cys428, Cys431, Cys452, and Cys455. NAD(+)-binding positions include 527 to 529 (GTS), 552 to 554 (NKD), and Cys569. Residues 617 to 670 (AELEAEEEKHLPLQQSTAALTPPVSLSADSPGRSSSSSPQPPTQTDIANNQTST) are disordered. Residues 641 to 654 (SLSADSPGRSSSSS) show a composition bias toward low complexity. Positions 659 to 670 (TQTDIANNQTST) are enriched in polar residues.

It belongs to the sirtuin family. Class I subfamily. Requires Zn(2+) as cofactor.

Its subcellular location is the nucleus. It carries out the reaction N(6)-acetyl-L-lysyl-[protein] + NAD(+) + H2O = 2''-O-acetyl-ADP-D-ribose + nicotinamide + L-lysyl-[protein]. Functionally, NAD-dependent deacetylase, which asts as a key regulator of gene expression believed to help form modified chromatin structures on the genes it regulates. It is involved in telomeric silencing and in hm mating type loci silencing. The sequence is that of NAD-dependent histone deacetylase SIR2 (SIR2) from Kluyveromyces lactis (strain ATCC 8585 / CBS 2359 / DSM 70799 / NBRC 1267 / NRRL Y-1140 / WM37) (Yeast).